Consider the following 253-residue polypeptide: UPF0758 protein Bxeno_A3578 (253 aa).

The MPN domain maps to 131–253; sequence LINSPEAVEN…VYSFARAGWP (123 aa). Zn(2+) contacts are provided by H202, H204, and D215. The JAMM motif motif lies at 202 to 215; sequence HNHPSGAVQPSASD.

This sequence belongs to the UPF0758 family.

The chain is UPF0758 protein Bxeno_A3578 from Paraburkholderia xenovorans (strain LB400).